The following is a 292-amino-acid chain: T-box transcription factor tbx-9 (292 aa).

Positions 10–194 (GSQETLWKIF…HNSFAKGFRD (185 aa)) form a DNA-binding region, T-box. 2 disordered regions span residues 192–227 (FRDGNLSRKRRSPSYSDGSNSQSPSPKSRSPPEVAP) and 265–292 (STPSSSSSELSIVKEEDQEVEEDIDIVG). Composition is skewed to low complexity over residues 204–223 (PSYSDGSNSQSPSPKSRSPP) and 265–275 (STPSSSSSELS). Over residues 280 to 292 (EDQEVEEDIDIVG) the composition is skewed to acidic residues.

It is found in the nucleus. Transcription factor. Involved in the control of early morphogenesis of the intestine, hypodermis and body-wall muscle. Involved in regulating expression of vab-7. Appears to have partially redundant function to tbx-8. Positively modulates expression of homeobox protein lin-39, perhaps by binding to regulatory regions of the lin-39 gene, acting in the vulval lineage. This chain is T-box transcription factor tbx-9 (tbx-9), found in Caenorhabditis elegans.